A 41-amino-acid chain; its full sequence is uncharacterized protein (41 aa).

This is an uncharacterized protein from Treponema pallidum (strain Nichols).